The sequence spans 118 residues: Myotrophin (118 aa).

ANK repeat units follow at residues 1–30, 34–65, and 67–98; these read MSDKEFMWALKNGDLDEVKDYVAKGEDVNR, GGRKPLHYAADCGQLEILEFLLLKGADINAPD, and HNITPLLSAVYEGHVSCVKLLLSKGADKTVKG.

It belongs to the myotrophin family.

The protein resides in the cytoplasm. The protein localises to the nucleus. It localises to the perinuclear region. Its function is as follows. Regulates NF-kappa-B transcription factor activity. Promotes growth of cardiomyocytes, but not cardiomyocyte proliferation. Promotes cardiac muscle hypertrophy. Plays a role in the regulation of the growth of actin filaments. Inhibits the activity of the F-actin-capping protein complex. This chain is Myotrophin (MTPN), found in Gallus gallus (Chicken).